A 434-amino-acid chain; its full sequence is Aspartate--tRNA(Asp/Asn) ligase (434 aa).

E167 contributes to the L-aspartate binding site. Residues 189 to 192 (QLFK) are aspartate. Residue R211 coordinates L-aspartate. ATP-binding positions include 211–213 (RAE), 219–221 (RHL), and E357. 2 residues coordinate Mg(2+): E357 and S360. L-aspartate is bound by residues S360 and R364. 405 to 408 (GGER) is a binding site for ATP.

It belongs to the class-II aminoacyl-tRNA synthetase family. Type 2 subfamily. In terms of assembly, homodimer. The cofactor is Mg(2+).

It is found in the cytoplasm. It catalyses the reaction tRNA(Asx) + L-aspartate + ATP = L-aspartyl-tRNA(Asx) + AMP + diphosphate. Aspartyl-tRNA synthetase with relaxed tRNA specificity since it is able to aspartylate not only its cognate tRNA(Asp) but also tRNA(Asn). Reaction proceeds in two steps: L-aspartate is first activated by ATP to form Asp-AMP and then transferred to the acceptor end of tRNA(Asp/Asn). This Haloquadratum walsbyi (strain DSM 16790 / HBSQ001) protein is Aspartate--tRNA(Asp/Asn) ligase.